The primary structure comprises 645 residues: 1,4-alpha-glucan branching enzyme GlgB (645 aa).

Asp309 acts as the Nucleophile in catalysis. The Proton donor role is filled by Glu352. The interval 619 to 645 is disordered; that stretch reads VKTRKGSKKQDGSKTKVRSNVTSRGKR. Positions 636–645 are enriched in polar residues; it reads RSNVTSRGKR.

The protein belongs to the glycosyl hydrolase 13 family. GlgB subfamily. As to quaternary structure, monomer.

The enzyme catalyses Transfers a segment of a (1-&gt;4)-alpha-D-glucan chain to a primary hydroxy group in a similar glucan chain.. It functions in the pathway glycan biosynthesis; glycogen biosynthesis. In terms of biological role, catalyzes the formation of the alpha-1,6-glucosidic linkages in glycogen by scission of a 1,4-alpha-linked oligosaccharide from growing alpha-1,4-glucan chains and the subsequent attachment of the oligosaccharide to the alpha-1,6 position. This chain is 1,4-alpha-glucan branching enzyme GlgB, found in Bacillus cereus (strain AH820).